Consider the following 398-residue polypeptide: Interleukin-1 receptor type 2 (398 aa).

The first 13 residues, 1–13, serve as a signal peptide directing secretion; sequence MLRLYVLVMGVSA. Topologically, residues 14 to 343 are extracellular; the sequence is FTLQPAAHTG…FQTLRTTVKE (330 aa). Ig-like C2-type domains follow at residues 18–124, 134–223, and 237–349; these read PAAH…IELR, PFIS…ITRS, and PVII…STFS. Intrachain disulfides connect cysteine 28–cysteine 116, cysteine 50–cysteine 108, and cysteine 152–cysteine 207. N-linked (GlcNAc...) asparagine glycosylation is found at asparagine 66, asparagine 72, and asparagine 112. Residues asparagine 219 and asparagine 277 are each glycosylated (N-linked (GlcNAc...) asparagine). An intrachain disulfide couples cysteine 258 to cysteine 326. Positions 329 to 343 are contains proteolytic cleavage site; that stretch reads HNTLSFQTLRTTVKE. A helical membrane pass occupies residues 344 to 369; sequence ASSTFSWGIVLAPLSLAFLVLGGIWM. Over 370–398 the chain is Cytoplasmic; that stretch reads HRRCKHRTGKADGLTVLWPHHQDFQSYPK.

This sequence belongs to the interleukin-1 receptor family. As to quaternary structure, associates with IL1RAP to form a non-signaling interleukin-1 receptor complex. In terms of processing, a soluble form (sIL1R2) can also be produced by proteolytic cleavage at the cell surface (shedding) involving a metalloproteinase; hovever, several sIL1R2 forms ranging from 45 and 60 kDa are reported.

It localises to the secreted. Its subcellular location is the cell membrane. Functionally, non-signaling receptor for IL1A, IL1B and IL1RN. Reduces IL1B activities. Serves as a decoy receptor by competitive binding to IL1B and preventing its binding to IL1R1. Also modulates cellular response through non-signaling association with IL1RAP after binding to IL1B. IL1R2 (membrane and secreted forms) preferentially binds IL1B and poorly IL1A and IL1RN. The secreted IL1R2 recruits secreted IL1RAP with high affinity; this complex formation may be the dominant mechanism for neutralization of IL1B by secreted/soluble receptors. The protein is Interleukin-1 receptor type 2 (IL1R2) of Homo sapiens (Human).